We begin with the raw amino-acid sequence, 219 residues long: MFSSTRRAEGPCATELTQVSSLLPPRGPYEFSLLPTLTRPLEDLSKCIEGARQTSATANGYSPTGLVPLADSILEICQAACTAYGLVDGAIAAGVGTGSSDNSPTATGIGAAGLTGDRPSSSGASTWRCVKTPMTLGSLTLQNEEESLLARQIVYAVLTSLSALLREVYVREKDVVSETDVVGEGGVGAGAALYGREGAGAVSQCLSRVLALLGKIVPE.

Residues 97 to 124 (TGSSDNSPTATGIGAAGLTGDRPSSSGA) are disordered. The segment covering 105-116 (TATGIGAAGLTG) has biased composition (low complexity).

It functions in the pathway polyketide biosynthesis. Part of the gene cluster that mediates the biosynthesis of asperlin, a polyketide showing anti-inflammatory, antitumor and antibiotic activities. The first step of the asperlin biosynthesis is the production of the intermediate 2,4,6-octatrienoic acid by the highly redusing polyketide synthase alnA with cleavage of the PKS product by the esterase alnB. 2,4,6-octatrienoic acid is further converted to asperlin via several steps involving the remaining enzymes from the cluster. This Emericella nidulans (strain FGSC A4 / ATCC 38163 / CBS 112.46 / NRRL 194 / M139) (Aspergillus nidulans) protein is Asperlin biosynthesis cluster protein I.